Reading from the N-terminus, the 488-residue chain is Multidrug resistance outer membrane protein MdtP (488 aa).

The signal sequence occupies residues 1-23 (MINRQLSRLLLCSILGSTTLISG). A lipid anchor (N-palmitoyl cysteine) is attached at cysteine 24. The S-diacylglycerol cysteine moiety is linked to residue cysteine 24.

The protein belongs to the outer membrane factor (OMF) (TC 1.B.17) family. As to quaternary structure, could be part of a tripartite efflux system composed of MdtN, MdtO and MdtP.

It localises to the cell outer membrane. Its function is as follows. Could be involved in resistance to puromycin, acriflavine and tetraphenylarsonium chloride. The chain is Multidrug resistance outer membrane protein MdtP (mdtP) from Escherichia coli O157:H7.